A 304-amino-acid chain; its full sequence is N-acetyllactosaminide alpha-2,3-sialyltransferase (304 aa).

CMP-N-acetyl-beta-neuraminate contacts are provided by residues 221 to 225 (FPHPA), 242 to 243 (FE), and 262 to 263 (SS). The active-site Proton donor is His-223.

The protein belongs to the glycosyltransferase 52 family.

The catalysed reaction is a beta-D-galactosyl-(1-&gt;4)-N-acetyl-beta-D-glucosaminyl derivative + CMP-N-acetyl-beta-neuraminate = an N-acetyl-alpha-neuraminyl-(2-&gt;3)-beta-D-galactosyl-(1-&gt;4)-N-acetyl-beta-D-glucosaminyl derivative + CMP + H(+). It participates in bacterial outer membrane biogenesis; lipooligosaccharide biosynthesis. In terms of biological role, catalyzes the transfer of sialic acid from the substrate CMP-N-acetylneuraminate to the terminal galactose residue of the N-acetyllactosamine moiety of surface lipooligosaccharide (LOS). Thus, functions in the sialylation of LOS, which plays a role in the evasion of the host immune response. This Haemophilus influenzae (strain ATCC 51907 / DSM 11121 / KW20 / Rd) protein is N-acetyllactosaminide alpha-2,3-sialyltransferase.